The chain runs to 144 residues: Transcription antitermination protein NusB (144 aa).

This sequence belongs to the NusB family.

Its function is as follows. Involved in transcription antitermination. Required for transcription of ribosomal RNA (rRNA) genes. Binds specifically to the boxA antiterminator sequence of the ribosomal RNA (rrn) operons. This Buchnera aphidicola subsp. Baizongia pistaciae (strain Bp) protein is Transcription antitermination protein NusB.